Reading from the N-terminus, the 786-residue chain is Constitutive coactivator of peroxisome proliferator-activated receptor gamma (786 aa).

The interval 1 to 561 (MGVRGLQGFV…GTPSLEVLWL (561 aa)) is mediates transactivation of PPARG. 2 disordered regions span residues 371–413 (PNQE…KLPS) and 738–786 (HWDS…WRRY). A compositionally biased stretch (polar residues) spans 750–771 (QGYSSYRTDSTHGHSGQSWRNQ).

The protein belongs to the constitutive coactivator of PPAR-gamma family. In terms of assembly, interacts with ESR1 and RXRA. Interacts with PPARG; in a ligand-independent manner. As to expression, ubiquitously expressed (at protein level).

The protein localises to the nucleus. Functions as a transactivator of PPARG and ESR1. Functions in adipogenesis through PPARG activation. The protein is Constitutive coactivator of peroxisome proliferator-activated receptor gamma (Fam120b) of Mus musculus (Mouse).